We begin with the raw amino-acid sequence, 104 residues long: Larval cuticle protein 65Ab1 (104 aa).

A signal peptide spans 1-18; it reads MKFLIVFVALFAMAVARP. In terms of domain architecture, Chitin-binding type R&amp;R spans 32-102; that stretch reads PEKWSSDVET…PQGAHLPVAP (71 aa).

Its function is as follows. Component of the cuticle of the larva. This is Larval cuticle protein 65Ab1 from Drosophila melanogaster (Fruit fly).